We begin with the raw amino-acid sequence, 212 residues long: uncharacterized protein (212 aa).

2 disordered regions span residues 1–25 (MARK…GRPN) and 165–212 (STSG…HWGG). A compositionally biased stretch (low complexity) spans 202–212 (RSSSARGHWGG).

This is an uncharacterized protein from Escherichia coli (strain K12).